Reading from the N-terminus, the 368-residue chain is MNTEASQDQTVTETPGVRLRQARESLGLTQQTVAERLCLKVSTIRDIEEDNAQANLASTFHRGYIRSYAKLVHLPEDELLPILEKQAPVRAAKVAPMQSFSLGKKHKKRDGWLMSFTWLIVLVVLGLTGAWWWQNHQAQQAEIANMVDQSSAQLSQNGGQPVPLTDDNSDAIAPTDAPAPVANGQPVPLTNHSTSAVTNSATTSSATTSSVPTTSSVPKTTLVPKTTLVPKTNSTEPVDTANTNTTMHQEGAASAAVSPSQVPQLGMPTDQPPLPTADAGVSGSASSVGALVMNFTADCWLQVVDATGKTLFSGIQKGGAVLNLAGKAPYKLTIGAPGALTISYQGNPVDLSKFIKANRVARLTVGVE.

Residues 1 to 111 (MNTEASQDQT…LGKKHKKRDG (111 aa)) are Cytoplasmic-facing. Residues 19–79 (LRQARESLGL…KLVHLPEDEL (61 aa)) enclose the HTH cro/C1-type domain. The H-T-H motif DNA-binding region spans 30-49 (QQTVAERLCLKVSTIRDIEE). The helical; Signal-anchor for type II membrane protein transmembrane segment at 112 to 132 (WLMSFTWLIVLVVLGLTGAWW) threads the bilayer. Topologically, residues 133 to 368 (WQNHQAQQAE…RVARLTVGVE (236 aa)) are periplasmic. Residues 151-243 (SAQLSQNGGQ…STEPVDTANT (93 aa)) form a disordered region. A compositionally biased stretch (low complexity) spans 193–221 (STSAVTNSATTSSATTSSVPTTSSVPKTT). The span at 229–243 (VPKTNSTEPVDTANT) shows a compositional bias: polar residues.

Belongs to the RodZ family.

It localises to the cell inner membrane. In terms of biological role, cytoskeletal protein that is involved in cell-shape control through regulation of the length of the long axis. This chain is Cytoskeleton protein RodZ, found in Yersinia pseudotuberculosis serotype O:3 (strain YPIII).